A 218-amino-acid polypeptide reads, in one-letter code: dTTP/UTP pyrophosphatase (218 aa).

The span at 1 to 10 shows a compositional bias: polar residues; sequence MTASPSSAEG. The disordered stretch occupies residues 1–20; sequence MTASPSSAEGSSGLPDRPKL. The active-site Proton acceptor is D87.

The protein belongs to the Maf family. YhdE subfamily. The cofactor is a divalent metal cation.

It is found in the cytoplasm. The enzyme catalyses dTTP + H2O = dTMP + diphosphate + H(+). It carries out the reaction UTP + H2O = UMP + diphosphate + H(+). Nucleoside triphosphate pyrophosphatase that hydrolyzes dTTP and UTP. May have a dual role in cell division arrest and in preventing the incorporation of modified nucleotides into cellular nucleic acids. The chain is dTTP/UTP pyrophosphatase from Gluconobacter oxydans (strain 621H) (Gluconobacter suboxydans).